Reading from the N-terminus, the 320-residue chain is tRNA uridine(34) hydroxylase (320 aa).

Residues 123–217 (EDENTVILDA…YGKDPETKGQ (95 aa)) enclose the Rhodanese domain. The active-site Cysteine persulfide intermediate is Cys-177.

Belongs to the TrhO family.

The enzyme catalyses uridine(34) in tRNA + AH2 + O2 = 5-hydroxyuridine(34) in tRNA + A + H2O. Catalyzes oxygen-dependent 5-hydroxyuridine (ho5U) modification at position 34 in tRNAs. This is tRNA uridine(34) hydroxylase from Staphylococcus epidermidis (strain ATCC 12228 / FDA PCI 1200).